A 1272-amino-acid polypeptide reads, in one-letter code: Fused isobutyryl-CoA mutase (1272 aa).

A B12-binding domain is found at Arg-20 to Ala-158. His-33 is an adenosylcob(III)alamin binding site. Residues Glu-163–Lys-536 are GTPase chaperone MeaI. A disordered region spans residues Gly-193–Ala-240. The span at Ala-221–Ala-240 shows a compositional bias: low complexity. Gly-334–Ser-339 is a GTP binding site. Residues Ser-338, Ile-363, Asp-364, and Asp-377 each contribute to the Mg(2+) site. Arg-380 provides a ligand contact to GTP. Residues Glu-429 and Thr-430 each contribute to the Mg(2+) site. Residue Asn-476–Asp-479 participates in GTP binding. Positions His-537–Pro-758 are linker. Composition is skewed to low complexity over residues Thr-614–Ala-631 and Ala-639–Thr-663. Residues Thr-614–Asn-667 form a disordered region. The substrate site is built by Phe-766, Arg-801, Arg-907, Tyr-951, Ser-1000, Arg-1035, and Lys-1040. GTP is bound by residues Glu-1152 and Asn-1271.

The protein belongs to the IcmF family. As to quaternary structure, homodimer. The cofactor is adenosylcob(III)alamin. Mg(2+) is required as a cofactor.

The enzyme catalyses 2-methylpropanoyl-CoA = butanoyl-CoA. It carries out the reaction GTP + H2O = GDP + phosphate + H(+). Catalyzes the reversible interconversion of isobutyryl-CoA and n-butyryl-CoA, using radical chemistry. Also exhibits GTPase activity, associated with its G-protein domain (MeaI) that functions as a chaperone that assists cofactor delivery and proper holo-enzyme assembly. Does not exhibit methylmalonyl-CoA mutase (MCM) activity. The sequence is that of Fused isobutyryl-CoA mutase from Paraburkholderia xenovorans (strain LB400).